The chain runs to 644 residues: Exoribonuclease 2 (644 aa).

Positions 189–516 constitute an RNB domain; it reads REDLTALDFV…NHRLLKAVIK (328 aa). Residues 561–643 form the S1 motif domain; that stretch reads DTRFAAEIVD…ETRSIIARPV (83 aa).

It belongs to the RNR ribonuclease family. RNase II subfamily.

The protein resides in the cytoplasm. The enzyme catalyses Exonucleolytic cleavage in the 3'- to 5'-direction to yield nucleoside 5'-phosphates.. In terms of biological role, involved in mRNA degradation. Hydrolyzes single-stranded polyribonucleotides processively in the 3' to 5' direction. The chain is Exoribonuclease 2 from Escherichia coli O45:K1 (strain S88 / ExPEC).